A 245-amino-acid polypeptide reads, in one-letter code: RNA polymerase sigma factor SigI5 (245 aa).

Positions Asp60–Ile73 match the Polymerase core binding motif. Residues Met202 to Ala221 constitute a DNA-binding region (H-T-H motif).

This sequence belongs to the sigma-70 factor family. SigI subfamily. As to quaternary structure, interacts with RsgI5.

It is found in the cytoplasm. Its activity is regulated as follows. Negatively regulated by the anti-sigma-I factor RsgI5. Binding of the polysaccharide substrate to RsgI5 may lead to the release and activation of SigI5. Sigma factors are initiation factors that promote the attachment of RNA polymerase to specific initiation sites and are then released. This sigma factor is involved in regulation of cellulosomal genes via an external polysaccharide-sensing mechanism. This is RNA polymerase sigma factor SigI5 from Acetivibrio thermocellus (strain ATCC 27405 / DSM 1237 / JCM 9322 / NBRC 103400 / NCIMB 10682 / NRRL B-4536 / VPI 7372) (Clostridium thermocellum).